The sequence spans 77 residues: Neurotoxin LmNaTx21.1 (77 aa).

A signal peptide spans 1 to 7; sequence LILVACL. In terms of domain architecture, LCN-type CS-alpha/beta spans 16 to 76; that stretch reads KDGYPVDWNN…VEIKGYGRCR (61 aa). 4 disulfides stabilise this stretch: C26/C75, C30/C51, C37/C58, and C41/C60.

Belongs to the long (4 C-C) scorpion toxin superfamily. Sodium channel inhibitor family. Alpha subfamily. Expressed by the venom gland.

The protein localises to the secreted. Functionally, binds voltage-independently at site-3 of voltage-gated sodium channels (Nav) and inhibits the inactivation of the activated channels, thereby blocking neuronal transmission. The chain is Neurotoxin LmNaTx21.1 from Lychas mucronatus (Chinese swimming scorpion).